Here is an 885-residue protein sequence, read N- to C-terminus: Leucine--tRNA ligase (885 aa).

Positions Pro46–His56 match the 'HIGH' region motif. The 'KMSKS' region motif lies at Lys638 to Ser642. Residue Lys641 participates in ATP binding.

This sequence belongs to the class-I aminoacyl-tRNA synthetase family.

The protein resides in the cytoplasm. The catalysed reaction is tRNA(Leu) + L-leucine + ATP = L-leucyl-tRNA(Leu) + AMP + diphosphate. This is Leucine--tRNA ligase from Xanthomonas campestris pv. campestris (strain B100).